A 64-amino-acid chain; its full sequence is Small ribosomal subunit protein eS17 (64 aa).

This sequence belongs to the eukaryotic ribosomal protein eS17 family.

The sequence is that of Small ribosomal subunit protein eS17 from Methanocorpusculum labreanum (strain ATCC 43576 / DSM 4855 / Z).